Consider the following 663-residue polypeptide: UvrABC system protein B (663 aa).

A Helicase ATP-binding domain is found at 26-183 (DGLESGLAKQ…KRLAEMQYTR (158 aa)). 39–46 (GVTGSGKT) contributes to the ATP binding site. Residues 92-115 (YYDYYQPEAYVPASDTFIEKDASI) carry the Beta-hairpin motif. The Helicase C-terminal domain occupies 430–596 (QVDDLMSEIR…GINKSVEDIL (167 aa)). A UVR domain is found at 624–659 (AKQINALEKQMYAHAQNMEFELAAKIRDEYLLLKEQ).

This sequence belongs to the UvrB family. As to quaternary structure, forms a heterotetramer with UvrA during the search for lesions. Interacts with UvrC in an incision complex.

It is found in the cytoplasm. In terms of biological role, the UvrABC repair system catalyzes the recognition and processing of DNA lesions. A damage recognition complex composed of 2 UvrA and 2 UvrB subunits scans DNA for abnormalities. Upon binding of the UvrA(2)B(2) complex to a putative damaged site, the DNA wraps around one UvrB monomer. DNA wrap is dependent on ATP binding by UvrB and probably causes local melting of the DNA helix, facilitating insertion of UvrB beta-hairpin between the DNA strands. Then UvrB probes one DNA strand for the presence of a lesion. If a lesion is found the UvrA subunits dissociate and the UvrB-DNA preincision complex is formed. This complex is subsequently bound by UvrC and the second UvrB is released. If no lesion is found, the DNA wraps around the other UvrB subunit that will check the other stand for damage. This Legionella pneumophila (strain Corby) protein is UvrABC system protein B.